Reading from the N-terminus, the 531-residue chain is Achacin (531 aa).

A signal peptide spans 1-22 (MLLLNSALFILCLVCWLPGTSS). Positions 23 to 29 (SRVLTRR) are excised as a propeptide. Residues N112, N150, N308, and N392 are each glycosylated (N-linked (GlcNAc...) asparagine).

The protein to A.kurodai aplysianin-A. As to quaternary structure, homodimer. As to expression, collar tissue.

Functionally, antibacterial glycoprotein. In Lissachatina fulica (Giant African land snail), this protein is Achacin.